We begin with the raw amino-acid sequence, 89 residues long: Small ribosomal subunit protein uS15 (89 aa).

The protein belongs to the universal ribosomal protein uS15 family. Part of the 30S ribosomal subunit. Forms a bridge to the 50S subunit in the 70S ribosome, contacting the 23S rRNA.

In terms of biological role, one of the primary rRNA binding proteins, it binds directly to 16S rRNA where it helps nucleate assembly of the platform of the 30S subunit by binding and bridging several RNA helices of the 16S rRNA. Its function is as follows. Forms an intersubunit bridge (bridge B4) with the 23S rRNA of the 50S subunit in the ribosome. The chain is Small ribosomal subunit protein uS15 from Desulfosudis oleivorans (strain DSM 6200 / JCM 39069 / Hxd3) (Desulfococcus oleovorans).